Reading from the N-terminus, the 395-residue chain is Dihydroorotate dehydrogenase (quinone), mitochondrial (395 aa).

The N-terminal 10 residues, 1–10 (MAWRQLRKRA), are a transit peptide targeting the mitochondrion; not cleaved. The Mitochondrial matrix segment spans residues 1 to 10 (MAWRQLRKRA). Residues 11 to 30 (LDAAIILGGGGLLFTSYLTA) form a helical membrane-spanning segment. Topologically, residues 31-395 (TGDDHFYAEY…TDAIGVDHRR (365 aa)) are mitochondrial intermembrane. FMN-binding positions include 95 to 99 (AGFDK) and serine 119. Lysine 99 contributes to the substrate binding site. 144-148 (NRYGF) contributes to the substrate binding site. FMN is bound by residues asparagine 180 and asparagine 211. Residue 211-216 (NVSSPN) participates in substrate binding. Residue serine 214 is the Nucleophile of the active site. FMN contacts are provided by lysine 254 and threonine 282. 283–284 (NT) lines the substrate pocket. FMN contacts are provided by residues glycine 305, glycine 334, and 355 to 356 (YT).

The protein belongs to the dihydroorotate dehydrogenase family. Type 2 subfamily. In terms of assembly, monomer. FMN is required as a cofactor. Post-translationally, the uncleaved transit peptide is required for mitochondrial targeting and proper membrane integration.

The protein resides in the mitochondrion inner membrane. It catalyses the reaction (S)-dihydroorotate + a quinone = orotate + a quinol. It participates in pyrimidine metabolism; UMP biosynthesis via de novo pathway; orotate from (S)-dihydroorotate (quinone route): step 1/1. Its function is as follows. Catalyzes the conversion of dihydroorotate to orotate with quinone as electron acceptor. Required for UMP biosynthesis via de novo pathway. This is Dihydroorotate dehydrogenase (quinone), mitochondrial (Dhodh) from Mus musculus (Mouse).